A 424-amino-acid chain; its full sequence is Arginine biosynthesis bifunctional protein ArgJ (424 aa).

Positions 166, 192, 203, 290, 419, and 424 each coordinate substrate. Threonine 203 (nucleophile) is an active-site residue.

This sequence belongs to the ArgJ family. As to quaternary structure, heterotetramer of two alpha and two beta chains.

The protein resides in the cytoplasm. The enzyme catalyses N(2)-acetyl-L-ornithine + L-glutamate = N-acetyl-L-glutamate + L-ornithine. It carries out the reaction L-glutamate + acetyl-CoA = N-acetyl-L-glutamate + CoA + H(+). It functions in the pathway amino-acid biosynthesis; L-arginine biosynthesis; L-ornithine and N-acetyl-L-glutamate from L-glutamate and N(2)-acetyl-L-ornithine (cyclic): step 1/1. It participates in amino-acid biosynthesis; L-arginine biosynthesis; N(2)-acetyl-L-ornithine from L-glutamate: step 1/4. Catalyzes two activities which are involved in the cyclic version of arginine biosynthesis: the synthesis of N-acetylglutamate from glutamate and acetyl-CoA as the acetyl donor, and of ornithine by transacetylation between N(2)-acetylornithine and glutamate. The sequence is that of Arginine biosynthesis bifunctional protein ArgJ from Colwellia psychrerythraea (strain 34H / ATCC BAA-681) (Vibrio psychroerythus).